A 345-amino-acid chain; its full sequence is D(2) dopamine receptor B (345 aa).

The Extracellular segment spans residues 1-10; it reads EWRFSRIHCD. The cysteines at positions 9 and 84 are disulfide-linked. The helical transmembrane segment at 11-32 threads the bilayer; sequence IFVTLDVMMCTASILNLCAISI. The Cytoplasmic segment spans residues 33 to 53; sequence DRYTAVAMPMLYNTRYSSKRR. Residues 54–74 form a helical membrane-spanning segment; sequence VTVMISVVWVLSFAISCPLLF. Residues 75–90 are Extracellular-facing; that stretch reads GLNNTASTVCIIDNPA. Asn77 carries an N-linked (GlcNAc...) asparagine glycan. The chain crosses the membrane as a helical span at residues 91–115; that stretch reads FVIYSSIVSFYVPFIVTLLVYVQIY. Residues 116 to 275 are Cytoplasmic-facing; the sequence is IVLRKRRKRV…SQHKEKKATQ (160 aa). The span at 166–177 shows a compositional bias: basic and acidic residues; the sequence is KKKVEAGNHPED. The interval 166–199 is disordered; the sequence is KKKVEAGNHPEDMEMEMMSSTSPPEKTKHKSASP. A helical transmembrane segment spans residues 276–297; that stretch reads MLAIVLGVFIICWLPFFITHIL. The Extracellular portion of the chain corresponds to 298 to 311; sequence NMHCNCNIPQALYS. A disulfide bridge connects residues Cys301 and Cys303. The chain crosses the membrane as a helical span at residues 312 to 333; it reads AFTWLGYVNSAVNPIIYTTFNV. Residues 334–345 are Cytoplasmic-facing; the sequence is EFRKAFIKILHC. Residue Cys345 is the site of S-palmitoyl cysteine attachment.

Belongs to the G-protein coupled receptor 1 family. Post-translationally, palmitoylated. Palmitoylation is probably required for proper localization to the plasma membrane and stability of the receptor. As to expression, brain; pituitary.

The protein localises to the cell membrane. Its subcellular location is the golgi apparatus membrane. Its function is as follows. This is one of the five types (D1 to D5) of receptors for dopamine. The activity of this receptor is mediated by G proteins which inhibits adenylyl cyclase. In Xenopus D2R is involved in the regulation of the melanotrope cells of the intermediate pituitary during background adaptation of the animal. The sequence is that of D(2) dopamine receptor B (drd2-b) from Xenopus laevis (African clawed frog).